The sequence spans 931 residues: Envelope glycoprotein B (931 aa).

Positions 1-71 (MSPCGYYSKW…FSMFVTAVVS (71 aa)) are cleaved as a signal peptide. Over 72-786 (VSPSSFYESL…HGFTTFLSNP (715 aa)) the chain is Virion surface. Intrachain disulfides connect Cys-122–Cys-584, Cys-139–Cys-540, Cys-213–Cys-277, Cys-369–Cys-417, and Cys-608–Cys-645. Asn-147 carries an N-linked (GlcNAc...) asparagine; by host glycan. The tract at residues 179 to 185 (AWAGSSY) is involved in fusion and/or binding to host membrane. Asn-257 is a glycosylation site (N-linked (GlcNAc...) asparagine; by host). Positions 264–271 (GTPGTYRT) are involved in fusion and/or binding to host membrane. N-linked (GlcNAc...) asparagine; by host glycans are attached at residues Asn-435, Asn-503, Asn-620, and Asn-686. Hydrophobic membrane proximal region regions lie at residues 731–784 (IDKV…TFLS) and 764–784 (VVLG…TFLS). The chain crosses the membrane as a helical span at residues 787 to 807 (FGALAVGLLVLAGLVAAFFAY). Residues 808–931 (RYVLKLKTSP…RVRTENVTGV (124 aa)) are Intravirion-facing. A Golgi targeting motif is present at residues 881 to 884 (YMTL). Residues 904–906 (LLT) carry the Di-leucine internalization motif motif. Positions 920–923 (YSRV) match the Internalization motif motif.

This sequence belongs to the herpesviridae glycoprotein B family. Homotrimer; disulfide-linked. Binds to heparan sulfate proteoglycans. Interacts with gH/gL heterodimer. Interacts with gE. Post-translationally, a proteolytic cleavage by host furin generates two subunits that remain linked by disulfide bonds.

The protein resides in the virion membrane. It is found in the host cell membrane. Its subcellular location is the host endosome membrane. The protein localises to the host Golgi apparatus membrane. Its function is as follows. Envelope glycoprotein that forms spikes at the surface of virion envelope. Essential for the initial attachment to heparan sulfate moieties of the host cell surface proteoglycans. Involved in fusion of viral and cellular membranes leading to virus entry into the host cell. Following initial binding to its host receptors, membrane fusion is mediated by the fusion machinery composed at least of gB and the heterodimer gH/gL. May be involved in the fusion between the virion envelope and the outer nuclear membrane during virion egress. The sequence is that of Envelope glycoprotein B from Varicella-zoster virus (strain Dumas) (HHV-3).